Here is a 233-residue protein sequence, read N- to C-terminus: Probable septum site-determining protein MinC (233 aa).

The tract at residues 98-123 is disordered; sequence LTEGKEKAPRPAPSEPTPPPPPVANQ. The segment covering 107–120 has biased composition (pro residues); it reads RPAPSEPTPPPPPV.

Belongs to the MinC family. As to quaternary structure, interacts with MinD and FtsZ.

Cell division inhibitor that blocks the formation of polar Z ring septums. Rapidly oscillates between the poles of the cell to destabilize FtsZ filaments that have formed before they mature into polar Z rings. Prevents FtsZ polymerization. In Klebsiella pneumoniae (strain 342), this protein is Probable septum site-determining protein MinC.